The primary structure comprises 253 residues: REF/SRPP-like protein OsI_017815 (253 aa).

The tract at residues 1-26 is disordered; that stretch reads MADSGSDAPISNRPEEEVTVEKTPEM. Positions 13–26 are enriched in basic and acidic residues; it reads RPEEEVTVEKTPEM.

Belongs to the REF/SRPP family.

The protein is REF/SRPP-like protein OsI_017815 of Oryza sativa subsp. indica (Rice).